The sequence spans 157 residues: Universal stress protein Sll1654 (157 aa).

This sequence belongs to the universal stress protein A family.

The chain is Universal stress protein Sll1654 from Synechocystis sp. (strain ATCC 27184 / PCC 6803 / Kazusa).